A 138-amino-acid chain; its full sequence is MLMPKRTKYRRPHRVSYEGKAKGRNEIINGDFALVAKEGAWITNRQIEAARIAMTREMKRLGKVWINIFPHLAKTKKPMEVRMGSGKGAPDSWVAVVKEGKIMFEINGVSEATAREALRKAGHKLPIKVKIVKRGEEA.

The protein belongs to the universal ribosomal protein uL16 family. Part of the 50S ribosomal subunit.

In terms of biological role, binds 23S rRNA and is also seen to make contacts with the A and possibly P site tRNAs. This Acholeplasma laidlawii (strain PG-8A) protein is Large ribosomal subunit protein uL16.